We begin with the raw amino-acid sequence, 587 residues long: 5-aminolevulinate synthase, erythroid-specific, mitochondrial (587 aa).

A mitochondrion-targeting transit peptide spans 1-49 (MVTAAMLLQCCPVLARGPTSLLGKVVKTHQFLFGIGRCPILATQGPNCS). A succinyl-CoA-binding site is contributed by Arg163. 2 residues coordinate pyridoxal 5'-phosphate: Cys258 and Phe259. 2 residues coordinate succinyl-CoA: Ser280 and Lys299. Ser332, His360, and Thr388 together coordinate pyridoxal 5'-phosphate. The active site involves Lys391. Lys391 carries the post-translational modification N6-(pyridoxal phosphate)lysine. Positions 420 and 421 each coordinate pyridoxal 5'-phosphate. Residue Thr508 participates in succinyl-CoA binding.

This sequence belongs to the class-II pyridoxal-phosphate-dependent aminotransferase family. In terms of assembly, homodimer. Interacts with SUCLA2. Interacts with SUCLA2. Pyridoxal 5'-phosphate serves as cofactor. Erythroid-specific.

The protein resides in the mitochondrion inner membrane. The enzyme catalyses succinyl-CoA + glycine + H(+) = 5-aminolevulinate + CO2 + CoA. It functions in the pathway porphyrin-containing compound metabolism; protoporphyrin-IX biosynthesis; 5-aminolevulinate from glycine: step 1/1. Its activity is regulated as follows. Down-regulated by itaconyl-CoA which acts as a competitive inhibitor of succinyl-CoA substrate. In terms of biological role, catalyzes the pyridoxal 5'-phosphate (PLP)-dependent condensation of succinyl-CoA and glycine to form aminolevulinic acid (ALA), with CoA and CO2 as by-products. Contributes significantly to heme formation during erythropoiesis. Its function is as follows. Catalyzes the pyridoxal 5'-phosphate (PLP)-dependent condensation of succinyl-CoA and glycine to form aminolevulinic acid (ALA), with CoA and CO2 as by-products. Catalytic activity is 75-85% of isoform 1 activity. Functionally, catalyzes the pyridoxal 5'-phosphate (PLP)-dependent condensation of succinyl-CoA and glycine to form aminolevulinic acid (ALA), with CoA and CO2 as by-products. Catalytic activity is 65-75% of isoform 1 activity. The sequence is that of 5-aminolevulinate synthase, erythroid-specific, mitochondrial from Homo sapiens (Human).